Here is a 932-residue protein sequence, read N- to C-terminus: Protocadherin gamma-A8 (932 aa).

An N-terminal signal peptide occupies residues 1 to 29 (MAAPQSRPRRGELILLCALLGTLWEIGRG). Cadherin domains lie at 30-133 (QIRY…NPKF), 134-242 (QVED…APVF), 243-347 (PHPI…RPEV), 348-452 (IITS…PPTF), 453-562 (PHAS…APEI), and 570-682 (DGST…KPSV). Topologically, residues 30–692 (QIRYSVPEET…DPNDSSLTLY (663 aa)) are extracellular. N-linked (GlcNAc...) asparagine glycosylation occurs at Asn-47. 3 N-linked (GlcNAc...) asparagine glycosylation sites follow: Asn-414, Asn-419, and Asn-545. Asn-685 is a glycosylation site (N-linked (GlcNAc...) asparagine). Residues 693–713 (LVVAVAAISCVFLAFVAVLLG) form a helical membrane-spanning segment. The Cytoplasmic portion of the chain corresponds to 714–932 (LRLRRWHKSR…KKKSGKKEKK (219 aa)). Disordered regions lie at residues 804–841 (ADHG…WPNN) and 902–932 (ATLT…KEKK). A compositionally biased stretch (polar residues) spans 810-841 (APPNTDWRFSQAQRPGTSGSQNGDDTGTWPNN). Positions 922 to 932 (NKKKSGKKEKK) are enriched in basic residues.

The protein resides in the cell membrane. In terms of biological role, potential calcium-dependent cell-adhesion protein. May be involved in the establishment and maintenance of specific neuronal connections in the brain. The polypeptide is Protocadherin gamma-A8 (PCDHGA8) (Homo sapiens (Human)).